The following is a 181-amino-acid chain: Translation initiation factor IF-3 (181 aa).

The protein belongs to the IF-3 family. In terms of assembly, monomer.

The protein resides in the cytoplasm. In terms of biological role, IF-3 binds to the 30S ribosomal subunit and shifts the equilibrium between 70S ribosomes and their 50S and 30S subunits in favor of the free subunits, thus enhancing the availability of 30S subunits on which protein synthesis initiation begins. This chain is Translation initiation factor IF-3, found in Cereibacter sphaeroides (strain ATCC 17023 / DSM 158 / JCM 6121 / CCUG 31486 / LMG 2827 / NBRC 12203 / NCIMB 8253 / ATH 2.4.1.) (Rhodobacter sphaeroides).